Here is a 1423-residue protein sequence, read N- to C-terminus: Serum albumin SDS-1 (1423 aa).

An N-terminal signal peptide occupies residues 1 to 23 (MGKAMLKLCITLMVLVFSGTAES). A propeptide spanning residues 24 to 29 (KGVMRR) is cleaved from the precursor. 7 consecutive Albumin domains span residues 29–230 (REDE…EDFK), 231–426 (HKLT…EFKS), 427–608 (EVEK…SDFK), 609–811 (MDVE…SQAR), 812–1031 (QEAL…HTIH), 1032–1226 (MEIR…AIEK), and 1227–1422 (VIKD…AIKS). His-36 provides a ligand contact to Cu cation. Intrachain disulfides connect Cys-42-Cys-88, Cys-87-Cys-96, Cys-109-Cys-125, Cys-124-Cys-135, Cys-167-Cys-212, Cys-211-Cys-221, Cys-244-Cys-290, Cys-289-Cys-298, Cys-311-Cys-327, Cys-326-Cys-337, Cys-363-Cys-408, Cys-407-Cys-416, Cys-439-Cys-485, Cys-484-Cys-493, Cys-506-Cys-522, and Cys-521-Cys-532. N-linked (GlcNAc...) asparagine glycosylation is present at Asn-490. Asn-541 carries N-linked (GlcNAc...) asparagine glycosylation. 11 cysteine pairs are disulfide-bonded: Cys-556–Cys-601, Cys-622–Cys-668, Cys-667–Cys-676, Cys-689–Cys-705, Cys-704–Cys-715, Cys-747–Cys-792, Cys-791–Cys-802, Cys-825–Cys-871, Cys-870–Cys-879, Cys-892–Cys-907, and Cys-906–Cys-947. Asn-652 carries N-linked (GlcNAc...) asparagine glycosylation. Residue Asn-754 is glycosylated (N-linked (GlcNAc...) asparagine). N-linked (GlcNAc...) asparagine glycans are attached at residues Asn-908 and Asn-911. The tract at residues 910 to 936 (SNTSTTTSTTTSTTTSTTTSTTTSTTS) is disordered. 7 repeat units span residues 913–916 (STTT), 917–920 (STTT), 921–924 (STTT), 925–928 (STTT), 929–932 (STTT), 933–935 (STT), and 936–939 (STTT). Positions 913–939 (STTTSTTTSTTTSTTTSTTTSTTSTTT) are 7 X 4 AA tandem repeats of S-T-T-T. Asn-954 is a glycosylation site (N-linked (GlcNAc...) asparagine). 8 disulfides stabilise this stretch: Cys-969–Cys-1014, Cys-1013–Cys-1022, Cys-1045–Cys-1091, Cys-1090–Cys-1099, Cys-1112–Cys-1128, Cys-1127–Cys-1138, Cys-1163–Cys-1208, and Cys-1207–Cys-1216. The N-linked (GlcNAc...) asparagine glycan is linked to Asn-1070. An N-linked (GlcNAc...) asparagine glycan is attached at Asn-1236. Intrachain disulfides connect Cys-1239-Cys-1285, Cys-1284-Cys-1291, Cys-1304-Cys-1320, Cys-1319-Cys-1330, Cys-1359-Cys-1404, and Cys-1403-Cys-1412.

The protein belongs to the ALB/AFP/VDB family. As to expression, plasma.

It is found in the secreted. Its function is as follows. Serum albumin, the main protein of plasma, has a good binding capacity for water, Ca(2+), Na(+), K(+), fatty acids, hormones, bilirubin and drugs. Its main function is the regulation of the colloidal osmotic pressure of blood. The chain is Serum albumin SDS-1 (SDS-1) from Petromyzon marinus (Sea lamprey).